The primary structure comprises 822 residues: Anaphase-promoting complex subunit 2 (822 aa).

Phosphoserine is present on residues Ser218, Ser314, Ser470, Ser534, and Ser697. The segment at 450-495 (GDLAVELSKTDPASLETGQDSEDDSGEPEDWVPDPVDADPGKSSSK) is disordered. Acidic residues predominate over residues 468–481 (QDSEDDSGEPEDWV). The tract at residues 502–700 (ISLLVSIYGS…LLRRRMSVWL (199 aa)) is cullin homology. The residue at position 810 (Tyr810) is a Phosphotyrosine.

It belongs to the cullin family. As to quaternary structure, the mammalian APC/C is composed at least of 14 distinct subunits ANAPC1, ANAPC2, CDC27/APC3, ANAPC4, ANAPC5, CDC16/APC6, ANAPC7, CDC23/APC8, ANAPC10, ANAPC11, CDC26/APC12, ANAPC13, ANAPC15 and ANAPC16 that assemble into a complex of at least 19 chains with a combined molecular mass of around 1.2 MDa; APC/C interacts with FZR1 and FBXO5. In the context of the APC/C complex, directly interacts with UBE2C and UBE2S. Interacts (via cullin domain) with ANAPC11 and with UBCH10. Interacts with NEUROD2. Interacts with FBXO43; the interaction is direct.

It functions in the pathway protein modification; protein ubiquitination. Its function is as follows. Together with the RING-H2 protein ANAPC11, constitutes the catalytic component of the anaphase promoting complex/cyclosome (APC/C), a cell cycle-regulated E3 ubiquitin ligase that controls progression through mitosis and the G1 phase of the cell cycle. The APC/C complex acts by mediating ubiquitination and subsequent degradation of target proteins: it mainly mediates the formation of 'Lys-11'-linked polyubiquitin chains and, to a lower extent, the formation of 'Lys-48'- and 'Lys-63'-linked polyubiquitin chains. The APC/C complex catalyzes assembly of branched 'Lys-11'-/'Lys-48'-linked branched ubiquitin chains on target proteins. The CDC20-APC/C complex positively regulates the formation of synaptic vesicle clustering at active zone to the presynaptic membrane in postmitotic neurons. CDC20-APC/C-induced degradation of NEUROD2 drives presynaptic differentiation. This Homo sapiens (Human) protein is Anaphase-promoting complex subunit 2 (ANAPC2).